We begin with the raw amino-acid sequence, 160 residues long: MPSFDIVSEIDAVELRNAVENSTRELASRFDFRNVDASFELKEETVKLAAEDDFQLGQMMDILRGNLAKRGVDARAMKAKDSVHIGKNWYKEAEFKQGLEALLAKKIVKLIKDAKIKVQASIQGDKVRVTGKKRDDLQEVMAMLREANLEQPLQYNNFRE.

The protein belongs to the YajQ family.

Nucleotide-binding protein. The sequence is that of Nucleotide-binding protein VC_1508 from Vibrio cholerae serotype O1 (strain ATCC 39315 / El Tor Inaba N16961).